The primary structure comprises 874 residues: Probable inorganic carbon transporter subunit DabA (874 aa).

Zn(2+) contacts are provided by cysteine 398, aspartate 400, histidine 580, and cysteine 595.

Belongs to the inorganic carbon transporter (TC 9.A.2) DabA family. Forms a complex with DabB. Requires Zn(2+) as cofactor.

It is found in the cell membrane. In terms of biological role, part of an energy-coupled inorganic carbon pump. In Bacillus cereus (strain ZK / E33L), this protein is Probable inorganic carbon transporter subunit DabA.